Reading from the N-terminus, the 166-residue chain is Sec-independent protein translocase protein TatB (166 aa).

Residues 2 to 22 traverse the membrane as a helical segment; sequence FDGIGFMELLLIGVLGLVVLG. The segment at 69–166 is disordered; the sequence is SKGLSNLSPE…DTRSNPKANG (98 aa). 2 stretches are compositionally biased toward polar residues: residues 88–97 and 112–132; these read QAAQSVNRPY and QIHS…SQAN. Residues 133 to 153 are compositionally biased toward low complexity; that stretch reads PTATVEASPTSASPATPSEPS. Over residues 155 to 166 the composition is skewed to polar residues; it reads GADTRSNPKANG.

This sequence belongs to the TatB family. In terms of assembly, the Tat system comprises two distinct complexes: a TatABC complex, containing multiple copies of TatA, TatB and TatC subunits, and a separate TatA complex, containing only TatA subunits. Substrates initially bind to the TatABC complex, which probably triggers association of the separate TatA complex to form the active translocon.

The protein resides in the cell inner membrane. Part of the twin-arginine translocation (Tat) system that transports large folded proteins containing a characteristic twin-arginine motif in their signal peptide across membranes. Together with TatC, TatB is part of a receptor directly interacting with Tat signal peptides. TatB may form an oligomeric binding site that transiently accommodates folded Tat precursor proteins before their translocation. The sequence is that of Sec-independent protein translocase protein TatB from Shewanella baltica (strain OS223).